A 78-amino-acid polypeptide reads, in one-letter code: Antitoxin VapB1 (78 aa).

Positions 3–44 (TKVFQSGNSQAVRIPMDFRFDVDTVEIFRKENGDVVLRPVSK) constitute a SpoVT-AbrB domain.

It belongs to the VapB family. Forms multimers, as well forming as a complex with VapC1.

Functionally, antitoxin component of a type II toxin-antitoxin (TA) system. Upon expression in E.coli neutralizes the effect of toxin VapC1. In vitro inhibits the RNase activity of VapC1. This Haemophilus influenzae (strain R2866) protein is Antitoxin VapB1 (vapB1).